We begin with the raw amino-acid sequence, 342 residues long: Serpentine receptor class delta-33 (342 aa).

Helical transmembrane passes span 26-46, 62-82, 112-132, 148-168, 205-225, 261-281, and 287-307; these read IFVITVTILTSIGFLLNLLLL, IFLANTTITQLVYALFAVTSM, YVGILHLSLNSFISLMLSMIY, IILCIIGYFFPFLIFASCSNI, LIILTLAVTCGLVPIYFVMYW, IIPLVSVFPASIFWCLSQLGF, and YSYFIIPCLSLGCIADPVVTI.

It belongs to the nematode receptor-like protein srd family.

It is found in the membrane. The chain is Serpentine receptor class delta-33 (srd-33) from Caenorhabditis elegans.